Here is a 363-residue protein sequence, read N- to C-terminus: 3-isopropylmalate dehydrogenase (363 aa).

78-91 (GKKWDDLPINQRPE) serves as a coordination point for NAD(+). Positions 99, 109, 138, and 227 each coordinate substrate. Mg(2+) is bound by residues Asp-227, Asp-251, and Asp-255. Position 285–297 (285–297 (GSAPDIEGKNIAN)) interacts with NAD(+).

This sequence belongs to the isocitrate and isopropylmalate dehydrogenases family. LeuB type 1 subfamily. In terms of assembly, homodimer. It depends on Mg(2+) as a cofactor. The cofactor is Mn(2+).

It is found in the cytoplasm. It catalyses the reaction (2R,3S)-3-isopropylmalate + NAD(+) = 4-methyl-2-oxopentanoate + CO2 + NADH. The protein operates within amino-acid biosynthesis; L-leucine biosynthesis; L-leucine from 3-methyl-2-oxobutanoate: step 3/4. Its function is as follows. Catalyzes the oxidation of 3-carboxy-2-hydroxy-4-methylpentanoate (3-isopropylmalate) to 3-carboxy-4-methyl-2-oxopentanoate. The product decarboxylates to 4-methyl-2 oxopentanoate. The protein is 3-isopropylmalate dehydrogenase of Buchnera aphidicola subsp. Uroleucon rudbeckiae.